The sequence spans 421 residues: Testin (421 aa).

The PET domain maps to 92-199; it reads MILTNPVAAK…GDVKLPCEMD (108 aa). The tract at residues 133 to 164 is disordered; it reads EKQPVAGSEGAQYRKKQLAKQLPAHDQDPSKC. Basic and acidic residues predominate over residues 155 to 164; the sequence is PAHDQDPSKC. LIM zinc-binding domains follow at residues 234 to 297, 299 to 359, and 362 to 421; these read YSCY…CDSE, PRCA…NHAV, and QGCH…KRMS.

Belongs to the prickle / espinas / testin family. Interacts via LIM domain 1 with ZYX. Interacts (via LIM domain 3) with ENAH and VASP. Interacts with ALKBH4, talin, actin, alpha-actinin, GRIP1 and PXN. Interacts (via LIM domain 2) with ACTL7A (via N-terminus). Heterodimer with ACTL7A; the heterodimer interacts with ENAH to form a heterotrimer.

Its subcellular location is the cytoplasm. It localises to the cell junction. The protein localises to the focal adhesion. Its function is as follows. Scaffold protein that may play a role in cell adhesion, cell spreading and in the reorganization of the actin cytoskeleton. Plays a role in the regulation of cell proliferation. May act as a tumor suppressor. The polypeptide is Testin (TES) (Pan troglodytes (Chimpanzee)).